Reading from the N-terminus, the 136-residue chain is Frataxin, mitochondrial (136 aa).

It belongs to the frataxin family. As to quaternary structure, monomer. Oligomer.

The protein localises to the mitochondrion. It catalyses the reaction 4 Fe(2+) + O2 + 4 H(+) = 4 Fe(3+) + 2 H2O. In terms of biological role, promotes the biosynthesis of heme as well as the assembly and repair of iron-sulfur clusters by delivering Fe(2+) to proteins involved in these pathways. May play a role in the protection against iron-catalyzed oxidative stress through its ability to catalyze the oxidation of Fe(2+) to Fe(3+). May be able to store large amounts of the metal in the form of a ferrihydrite mineral by oligomerization. The protein is Frataxin, mitochondrial (frh-1) of Caenorhabditis elegans.